A 697-amino-acid chain; its full sequence is Elongation factor G 2 (697 aa).

Positions 5–280 (SKYRNIGIFA…AVVDYLPAPD (276 aa)) constitute a tr-type G domain. GTP-binding positions include 14–21 (AHVDAGKT), 78–82 (DTPGH), and 132–135 (NKLD).

The protein belongs to the TRAFAC class translation factor GTPase superfamily. Classic translation factor GTPase family. EF-G/EF-2 subfamily.

It is found in the cytoplasm. Catalyzes the GTP-dependent ribosomal translocation step during translation elongation. During this step, the ribosome changes from the pre-translocational (PRE) to the post-translocational (POST) state as the newly formed A-site-bound peptidyl-tRNA and P-site-bound deacylated tRNA move to the P and E sites, respectively. Catalyzes the coordinated movement of the two tRNA molecules, the mRNA and conformational changes in the ribosome. The protein is Elongation factor G 2 (fusB) of Shewanella oneidensis (strain ATCC 700550 / JCM 31522 / CIP 106686 / LMG 19005 / NCIMB 14063 / MR-1).